Consider the following 1241-residue polypeptide: DNA-directed RNA polymerase subunit beta (1241 aa).

Residues Ala-1201–Ile-1224 are disordered.

This sequence belongs to the RNA polymerase beta chain family. The RNAP catalytic core consists of 2 alpha, 1 beta, 1 beta' and 1 omega subunit. When a sigma factor is associated with the core the holoenzyme is formed, which can initiate transcription.

The enzyme catalyses RNA(n) + a ribonucleoside 5'-triphosphate = RNA(n+1) + diphosphate. In terms of biological role, DNA-dependent RNA polymerase catalyzes the transcription of DNA into RNA using the four ribonucleoside triphosphates as substrates. The chain is DNA-directed RNA polymerase subunit beta from Alkaliphilus oremlandii (strain OhILAs) (Clostridium oremlandii (strain OhILAs)).